The sequence spans 921 residues: Isoleucine--tRNA ligase (921 aa).

The 'HIGH' region signature appears at 57-67 (PYANGDIHMGH). Glutamate 552 contacts L-isoleucyl-5'-AMP. Positions 593–597 (KMSKS) match the 'KMSKS' region motif. Lysine 596 is an ATP binding site. Residues cysteine 888, cysteine 891, cysteine 908, and cysteine 911 each coordinate Zn(2+).

The protein belongs to the class-I aminoacyl-tRNA synthetase family. IleS type 1 subfamily. In terms of assembly, monomer. It depends on Zn(2+) as a cofactor.

The protein localises to the cytoplasm. It carries out the reaction tRNA(Ile) + L-isoleucine + ATP = L-isoleucyl-tRNA(Ile) + AMP + diphosphate. Functionally, catalyzes the attachment of isoleucine to tRNA(Ile). As IleRS can inadvertently accommodate and process structurally similar amino acids such as valine, to avoid such errors it has two additional distinct tRNA(Ile)-dependent editing activities. One activity is designated as 'pretransfer' editing and involves the hydrolysis of activated Val-AMP. The other activity is designated 'posttransfer' editing and involves deacylation of mischarged Val-tRNA(Ile). In Bacillus cereus (strain AH820), this protein is Isoleucine--tRNA ligase.